The chain runs to 132 residues: Histone H2A.1 (132 aa).

The protein belongs to the histone H2A family. In terms of assembly, the nucleosome is a histone octamer containing two molecules each of H2A, H2B, H3 and H4 assembled in one H3-H4 heterotetramer and two H2A-H2B heterodimers. The octamer wraps approximately 147 bp of DNA.

The protein localises to the nucleus. It localises to the chromosome. Functionally, core component of nucleosome. Nucleosomes wrap and compact DNA into chromatin, limiting DNA accessibility to the cellular machineries which require DNA as a template. Histones thereby play a central role in transcription regulation, DNA repair, DNA replication and chromosomal stability. DNA accessibility is regulated via a complex set of post-translational modifications of histones, also called histone code, and nucleosome remodeling. The sequence is that of Histone H2A.1 from Leishmania infantum.